The chain runs to 438 residues: Thymidine phosphorylase (438 aa).

This sequence belongs to the thymidine/pyrimidine-nucleoside phosphorylase family. As to quaternary structure, homodimer.

The enzyme catalyses thymidine + phosphate = 2-deoxy-alpha-D-ribose 1-phosphate + thymine. It functions in the pathway pyrimidine metabolism; dTMP biosynthesis via salvage pathway; dTMP from thymine: step 1/2. Its function is as follows. The enzymes which catalyze the reversible phosphorolysis of pyrimidine nucleosides are involved in the degradation of these compounds and in their utilization as carbon and energy sources, or in the rescue of pyrimidine bases for nucleotide synthesis. This Burkholderia orbicola (strain AU 1054) protein is Thymidine phosphorylase.